A 49-amino-acid polypeptide reads, in one-letter code: Putative metallothionein MT1DP (49 aa).

Residues 1–29 (MDLSCSCATGGSCTCASSCKCKEYKCTSC) are beta. A divalent metal cation-binding residues include C5, C7, C13, C15, C19, C21, C26, C29, C33, C34, C36, C37, C41, C44, and C48. The tract at residues 30–49 (KKNCCSCCPMGCAKCAQGCT) is alpha.

This sequence belongs to the metallothionein superfamily. Type 1 family.

Metallothioneins have a high content of cysteine residues that bind various heavy metals. This Homo sapiens (Human) protein is Putative metallothionein MT1DP (MT1DP).